The sequence spans 1549 residues: FERM and PDZ domain-containing protein 1 (1549 aa).

The PDZ domain maps to 57–135; the sequence is TVTLDKDVLL…ALSITVVRCT (79 aa). An FERM domain is found at 181 to 496; sequence NVLKVYLENG…GYYRLFVDPA (316 aa). 7 disordered regions span residues 554–618, 717–738, 775–834, 913–1046, 1097–1174, 1231–1257, and 1321–1347; these read AREE…DDLD, SHLS…PPQW, YDAA…YAKS, STNP…RSEI, SLDS…EAQE, LSPC…DDSP, and PETE…AGSQ. Polar residues predominate over residues 717-730; the sequence is SHLSDSGSESTASR. Positions 924–931 are important for interaction with GPSM2; the sequence is EPETMETK. Residues 950–961 show a composition bias toward polar residues; it reads PSNTENPVTTDG. Residues 962 to 980 show a composition bias toward low complexity; sequence SSASIPHSPHHSNPGSSSP. A compositionally biased stretch (basic and acidic residues) spans 1117–1130; that stretch reads SGKDLGDSKGDRLD.

In terms of assembly, interacts with GPSM1. Interacts with GPSM2.

It is found in the cytoplasm. Its subcellular location is the cytosol. The protein resides in the cell membrane. Its function is as follows. Stabilizes membrane-bound GPSM1, and thereby promotes its interaction with GNAI1. This Mus musculus (Mouse) protein is FERM and PDZ domain-containing protein 1 (Frmpd1).